Reading from the N-terminus, the 899-residue chain is Gamma-aminobutyric acid type B receptor subunit 1 (899 aa).

An N-terminal signal peptide occupies residues 1–19 (MFVRSSWLLLWGTIVWASA). Topologically, residues 20-447 (EPVTLHIGGT…KKHAMTVSNE (428 aa)) are extracellular. N-linked (GlcNAc...) asparagine glycosylation is found at asparagine 69, asparagine 266, asparagine 339, asparagine 353, and asparagine 371. A helical membrane pass occupies residues 448-468 (FYYPTILFAVLGIAACVFIYL). Residues 469 to 487 (FTQKHHERLIIFQSQPECN) are Cytoplasmic-facing. The helical transmembrane segment at 488–508 (NILLIGCSLCLFSLFLIGLPS) threads the bilayer. At 509 to 525 (DDISISESLFPLLCHAR) the chain is on the extracellular side. A helical membrane pass occupies residues 526–546 (VTILLFGFTFAYGSMFAKVWI). Over 547–616 (VHRMGATENQ…LNQPISSSKF (70 aa)) the chain is Cytoplasmic. Residues 617 to 637 (YVIVAALTAVDVFVCFVWVLI) form a helical membrane-spanning segment. The Extracellular portion of the chain corresponds to 638–674 (DPLHLTEQKFPLFTPADSEEDEMIMPVLQQCQSNQQE). Residues 675-695 (VWIGIIMGFKCLLLVFGTFLS) form a helical membrane-spanning segment. The Cytoplasmic segment spans residues 696 to 713 (YETRNLKLRFINDSRFVG). Residues 714–734 (LAIYNVAVMTLVTAPVVTLLI) traverse the membrane as a helical segment. Over 735–741 (HGKVDAN) the chain is Extracellular. A helical membrane pass occupies residues 742 to 762 (FAFISLTVLICTYISVGLIYG). Over 763–899 (PKIRHIIKVP…SSTSSDEILL (137 aa)) the chain is Cytoplasmic. A coiled-coil region spans residues 791–842 (KVDQKRYDMLKKENETLQIQIEEKERKIHECKERLEELTKNSETEDMNAQLL). Positions 870 to 899 (DLQNGNHPGQIYENDNDDDGSSTSSDEILL) are disordered. Over residues 890-899 (SSTSSDEILL) the composition is skewed to low complexity.

The protein belongs to the G-protein coupled receptor 3 family. May form a heterodimer with gbb-2. As to expression, expressed in the nervous system, including cholinergic motor neurons, but not in GABAergic motor neurons or muscle.

Its subcellular location is the cell membrane. Component of a heterodimeric G-protein coupled receptor for GABA, formed by gbb-1 and gbb-2. Within the heterodimeric GABA receptor, only gbb-1 seems to bind agonists, while gbb-2 mediates coupling to G proteins. Ligand binding causes a conformation change that triggers signaling via guanine nucleotide-binding proteins (G proteins) and modulates the activity of down-stream effectors, such as adenylate cyclase. Signaling inhibits adenylate cyclase, stimulates phospholipase A2, activates potassium channels, inactivates voltage-dependent calcium-channels and modulates inositol phospholipid hydrolysis. Calcium is required for high affinity binding to GABA. Plays a critical role in the fine-tuning of inhibitory synaptic transmission. Pre-synaptic GABA receptor inhibits neurotransmitter release by down-regulating high-voltage activated calcium channels, whereas postsynaptic GABA receptor decreases neuronal excitability by activating a prominent inwardly rectifying potassium (Kir) conductance that underlies the late inhibitory postsynaptic potentials. Along with gbb-2, may couple to the G(o)-alpha G-protein goa-1 to negatively regulate cholinergic receptor activity in the presence of high levels of acetylcholine in ventral cord motor neurons. As acetylcholine depolarizes body wall muscles, modulation of acetylcholine levels most likely results in the control of locomotory behavior. Acts in neurons to regulate lifespan, and this may be through G-protein-egl-8/PLC-beta signaling to the transcription factor daf-16/FOXO. This chain is Gamma-aminobutyric acid type B receptor subunit 1, found in Caenorhabditis elegans.